We begin with the raw amino-acid sequence, 132 residues long: Large-conductance mechanosensitive channel (132 aa).

Transmembrane regions (helical) follow at residues 14-34, 39-59, and 68-88; these read VLDM…VDSL, INPI…AVTI, and IGNF…VFLI.

This sequence belongs to the MscL family. Homopentamer.

It localises to the cell membrane. Functionally, channel that opens in response to stretch forces in the membrane lipid bilayer. May participate in the regulation of osmotic pressure changes within the cell. The polypeptide is Large-conductance mechanosensitive channel (Latilactobacillus sakei subsp. sakei (strain 23K) (Lactobacillus sakei subsp. sakei)).